Consider the following 284-residue polypeptide: uncharacterized protein (284 aa).

An N-terminal signal peptide occupies residues 1 to 21 (MKTTMLMLVLLVCSYIHYVCA). Helical transmembrane passes span 88-108 (AGPFAISQVFGPAGRLYFLWA), 144-164 (ALGVYPYVPTLTGFSTFLGVW), and 212-232 (VFTTFAGPPIATSTVFASPTY).

The protein resides in the membrane. This is an uncharacterized protein from Schizosaccharomyces pombe (strain 972 / ATCC 24843) (Fission yeast).